We begin with the raw amino-acid sequence, 346 residues long: NADH-ubiquinone oxidoreductase chain 2 (346 aa).

A run of 11 helical transmembrane segments spans residues 1–21 (MSPYISPLFSITMIMSVMLIS), 26–46 (WVFMWLGLELGTLAFIPILVW), 60–80 (FIVQAMAAAVFFLGGMVSLSG), 96–116 (MMIMLAVVTKLGLAPFHYWVV), 122–142 (LNYIPGAVLLTWQKVPGLAVL), 151–171 (SSMLLLFGMVSALVGGLGGLG), 178–198 (LLAFSSISHLGWLVVGCVAGS), 199–219 (LLGLSYFTLYVVLSIPLFSIL), 242–262 (VLLGVGFLSLGGLPPFFGFFG), 274–294 (LLLGVSVVLITGTLISLFYYL), and 320–340 (LSGLMSGLLVLNMLGLFLVGG).

It belongs to the complex I subunit 2 family.

It is found in the mitochondrion inner membrane. The catalysed reaction is a ubiquinone + NADH + 5 H(+)(in) = a ubiquinol + NAD(+) + 4 H(+)(out). In terms of biological role, core subunit of the mitochondrial membrane respiratory chain NADH dehydrogenase (Complex I) that is believed to belong to the minimal assembly required for catalysis. Complex I functions in the transfer of electrons from NADH to the respiratory chain. The immediate electron acceptor for the enzyme is believed to be ubiquinone. The sequence is that of NADH-ubiquinone oxidoreductase chain 2 (ND2) from Branchiostoma floridae (Florida lancelet).